We begin with the raw amino-acid sequence, 527 residues long: Protein IQ-DOMAIN 4 (527 aa).

The segment at 13–90 (CLSPGKDKKN…PPSPPPPPPA (78 aa)) is disordered. Over residues 17–26 (GKDKKNQKPE) the composition is skewed to basic and acidic residues. Residues 63–90 (PYPPPPPLPDFAPQPLLPPPSPPPPPPA) are compositionally biased toward pro residues. In terms of domain architecture, IQ spans 147 to 175 (EETAAIKIQNAYRCYTARRTLRALRGMAR). The interval 256–273 (RSVNRKEASVRRERALAY) is calmodulin-binding. The disordered stretch occupies residues 323-527 (VSVKSSLKRE…EKKRRNGGSS (205 aa)). Residues 335–360 (IKSSPARSKTQKSASQSSIQWPVNND) are compositionally biased toward polar residues. Over residues 361–370 (TKSRKIEVTN) the composition is skewed to basic and acidic residues. Polar residues-rich tracts occupy residues 399-422 (LDNT…NAQT) and 437-455 (NTKT…NLAN). Over residues 471–481 (PKKEVVADKKK) the composition is skewed to basic and acidic residues. The Nuclear localization signal motif lies at 478-485 (DKKKPPQM).

The protein belongs to the IQD family. Binds to multiple calmodulin (CaM) in the presence of Ca(2+) and CaM-like proteins.

The protein resides in the nucleus. Its subcellular location is the nucleolus. Functionally, may be involved in cooperative interactions with calmodulins or calmodulin-like proteins. Recruits calmodulin proteins to microtubules, thus being a potential scaffold in cellular signaling and trafficking. May associate with nucleic acids and regulate gene expression at the transcriptional or post-transcriptional level. This Arabidopsis thaliana (Mouse-ear cress) protein is Protein IQ-DOMAIN 4.